The sequence spans 98 residues: ACCARLCCSVPTSPATTICSSDKFCRCGVCLPSTCPHTVWFLQPTCCCDNRPPPCHIPQPSVPTCFLLNSSQPTPGLESINLTTYTQPSCEPCIPSCC.

Ala1 is subject to N-acetylalanine.

The protein belongs to the KRTAP type 3 family. In terms of assembly, interacts with wool keratins. Wool.

Its function is as follows. In the wool cortex, wool keratin intermediate filaments are embedded in an interfilamentous matrix, consisting of hair keratin-associated proteins (KRTAP), which are essential for the formation of a rigid and resistant wool shaft through their extensive disulfide bond cross-linking with abundant cysteine residues of wool keratins. The matrix proteins include the high-sulfur and high-glycine-tyrosine keratins. The protein is Keratin, high sulfur matrix protein, IIIB4 of Ovis aries (Sheep).